A 67-amino-acid chain; its full sequence is Peptide Ctry2606 (67 aa).

The signal sequence occupies residues 1–23; that stretch reads MKTQTALFSFFLVLLLVATQTEG. At leucine 33 the chain carries Leucine amide. Positions 37–67 are excised as a propeptide; sequence ALRNQNFVDYAFDPSLSAADWRALETLLEEY.

Belongs to the non-disulfide-bridged peptide (NDBP) superfamily. Short antimicrobial peptide (group 4) family. As to expression, expressed by the venom gland.

It is found in the secreted. Antimicrobial peptide. The sequence is that of Peptide Ctry2606 from Chaerilus tryznai (Scorpion).